Consider the following 172-residue polypeptide: RNA pyrophosphohydrolase (172 aa).

The Nudix hydrolase domain occupies 6-149; the sequence is GFRANVGIII…KRDVYRKVMK (144 aa). The Nudix box motif lies at 38 to 59; it reads GGVDEGETPEEAMFRELYEEVG.

Belongs to the Nudix hydrolase family. RppH subfamily. It depends on a divalent metal cation as a cofactor.

Its function is as follows. Accelerates the degradation of transcripts by removing pyrophosphate from the 5'-end of triphosphorylated RNA, leading to a more labile monophosphorylated state that can stimulate subsequent ribonuclease cleavage. This Shewanella sediminis (strain HAW-EB3) protein is RNA pyrophosphohydrolase.